A 273-amino-acid chain; its full sequence is Aspartate/glutamate leucyltransferase (273 aa).

This sequence belongs to the R-transferase family. Bpt subfamily.

The protein localises to the cytoplasm. The catalysed reaction is N-terminal L-glutamyl-[protein] + L-leucyl-tRNA(Leu) = N-terminal L-leucyl-L-glutamyl-[protein] + tRNA(Leu) + H(+). The enzyme catalyses N-terminal L-aspartyl-[protein] + L-leucyl-tRNA(Leu) = N-terminal L-leucyl-L-aspartyl-[protein] + tRNA(Leu) + H(+). In terms of biological role, functions in the N-end rule pathway of protein degradation where it conjugates Leu from its aminoacyl-tRNA to the N-termini of proteins containing an N-terminal aspartate or glutamate. This Ruegeria pomeroyi (strain ATCC 700808 / DSM 15171 / DSS-3) (Silicibacter pomeroyi) protein is Aspartate/glutamate leucyltransferase.